Here is a 351-residue protein sequence, read N- to C-terminus: GTP 3',8-cyclase (351 aa).

A Radical SAM core domain is found at 29-254; that stretch reads RFGRVARDLR…EHGREDPSAP (226 aa). R38 contributes to the GTP binding site. Positions 45 and 49 each coordinate [4Fe-4S] cluster. Y51 serves as a coordination point for S-adenosyl-L-methionine. C52 contributes to the [4Fe-4S] cluster binding site. R89 is a binding site for GTP. G93 provides a ligand contact to S-adenosyl-L-methionine. T120 is a GTP binding site. Position 144 (S144) interacts with S-adenosyl-L-methionine. K181 contributes to the GTP binding site. Residue M214 coordinates S-adenosyl-L-methionine. C278 and C281 together coordinate [4Fe-4S] cluster. A GTP-binding site is contributed by 283–285; the sequence is RTR. [4Fe-4S] cluster is bound at residue C295.

This sequence belongs to the radical SAM superfamily. MoaA family. As to quaternary structure, monomer and homodimer. [4Fe-4S] cluster serves as cofactor.

The enzyme catalyses GTP + AH2 + S-adenosyl-L-methionine = (8S)-3',8-cyclo-7,8-dihydroguanosine 5'-triphosphate + 5'-deoxyadenosine + L-methionine + A + H(+). It functions in the pathway cofactor biosynthesis; molybdopterin biosynthesis. In terms of biological role, catalyzes the cyclization of GTP to (8S)-3',8-cyclo-7,8-dihydroguanosine 5'-triphosphate. In Rhodococcus opacus (strain B4), this protein is GTP 3',8-cyclase.